Consider the following 107-residue polypeptide: Iron-binding protein IscA (107 aa).

3 residues coordinate Fe cation: C35, C99, and C101.

This sequence belongs to the HesB/IscA family. Homodimer; may form tetramers and higher multimers. Requires Fe cation as cofactor.

Functionally, is able to transfer iron-sulfur clusters to apo-ferredoxin. Multiple cycles of [2Fe2S] cluster formation and transfer are observed, suggesting that IscA acts catalytically. Recruits intracellular free iron so as to provide iron for the assembly of transient iron-sulfur cluster in IscU in the presence of IscS, L-cysteine and the thioredoxin reductase system TrxA/TrxB. The polypeptide is Iron-binding protein IscA (Enterobacter sp. (strain 638)).